The following is a 38-amino-acid chain: Potassium channel toxin alpha-KTx 3.8 (38 aa).

3 cysteine pairs are disulfide-bonded: Cys-8–Cys-28, Cys-14–Cys-33, and Cys-18–Cys-35. An interaction with Ca(2+)-activated K(+) channels region spans residues 26–33 (GKCMNGKC).

As to expression, expressed by the venom gland.

The protein resides in the secreted. In terms of biological role, potassium channel inhibitor. The polypeptide is Potassium channel toxin alpha-KTx 3.8 (Hottentotta tamulus sindicus (Scorpion)).